We begin with the raw amino-acid sequence, 385 residues long: SWI/SNF-related matrix-associated actin-dependent regulator of chromatin subfamily B member 1 (385 aa).

A DNA-binding region spans residues 1–113 (MMMMALSKTF…DEKYKAVSIS (113 aa)). Residues K106, K108, and K124 each participate in a glycyl lysine isopeptide (Lys-Gly) (interchain with G-Cter in SUMO2) cross-link. S129 carries the post-translational modification Phosphoserine. A Glycyl lysine isopeptide (Lys-Gly) (interchain with G-Cter in SUMO2) cross-link involves residue K161. Residues 183–243 (PEVLVPIRLD…VPAIASAIRQ (61 aa)) are HIV-1 integrase-binding. 2 tandem repeats follow at residues 186-245 (LVPI…RQQI) and 259-319 (DQRV…RGQL). The segment at 186–245 (LVPIRLDMEIDGQKLRDAFTWNMNEKLMTPEMFSEILCDDLDLNPLTFVPAIASAIRQQI) is MYC-binding. The 2 X approximate tandem repeats stretch occupies residues 186–319 (LVPIRLDMEI…TIAYSIRGQL (134 aa)). The tract at residues 304–318 (GGEFVTTIAYSIRGQ) is interaction with PPP1R15A.

This sequence belongs to the SNF5 family. In terms of assembly, component of the multiprotein chromatin-remodeling complexes SWI/SNF: SWI/SNF-A (BAF), SWI/SNF-B (PBAF) and related complexes. The canonical complex contains a catalytic subunit (either SMARCA4/BRG1/BAF190A or SMARCA2/BRM/BAF190B) and at least SMARCE1, ACTL6A/BAF53, SMARCC1/BAF155, SMARCC2/BAF170, and SMARCB1/SNF5/BAF47. Other subunits specific to each of the complexes may also be present permitting several possible combinations developmentally and tissue specific. Component of the BAF complex, which includes at least actin (ACTB), ARID1A/BAF250A, ARID1B/BAF250B, SMARCA2/BRM, SMARCA4/BRG1/BAF190A, ACTL6A/BAF53, ACTL6B/BAF53B, SMARCE1/BAF57 SMARCC1/BAF155, SMARCC2/BAF170, SMARCB1/SNF5/INI1, and one or more SMARCD1/BAF60A, SMARCD2/BAF60B, or SMARCD3/BAF60C. In muscle cells, the BAF complex also contains DPF3. Component of neural progenitors-specific chromatin remodeling complex (npBAF complex) composed of at least, ARID1A/BAF250A or ARID1B/BAF250B, SMARCD1/BAF60A, SMARCD3/BAF60C, SMARCA2/BRM/BAF190B, SMARCA4/BRG1/BAF190A, SMARCB1/BAF47, SMARCC1/BAF155, SMARCE1/BAF57, SMARCC2/BAF170, PHF10/BAF45A, ACTL6A/BAF53A and actin. Component of neuron-specific chromatin remodeling complex (nBAF complex) composed of at least, ARID1A/BAF250A or ARID1B/BAF250B, SMARCD1/BAF60A, SMARCD3/BAF60C, SMARCA2/BRM/BAF190B, SMARCA4/BRG1/BAF190A, SMARCB1/BAF47, SMARCC1/BAF155, SMARCE1/BAF57, SMARCC2/BAF170, DPF1/BAF45B, DPF3/BAF45C, ACTL6B/BAF53B and actin. Component of the SWI/SNF-B (PBAF) chromatin remodeling complex, at least composed of SMARCA4/BRG1, SMARCB1/BAF47/SNF5, ACTL6A/BAF53A or ACTL6B/BAF53B, SMARCE1/BAF57, SMARCD1/BAF60A, SMARCD2/BAF60B, perhaps SMARCD3/BAF60C, SMARCC1/BAF155, SMARCC2/BAF170, PBRM1/BAF180, ARID2/BAF200 and actin. Binds to double-stranded DNA. Interacts with CEBPB (when not methylated). Interacts with PIH1D1. Interacts with MYK and MAEL. Interacts with PPP1R15A. Interacts with DPF2. Interacts with YWHAZ. Interacts with ERCC6. Interacts with FOS, FOSB isoform 1 and 2, FOSL1 and FOSL2. As to quaternary structure, (Microbial infection) Binds tightly to the human immunodeficiency virus-type 1 (HIV-1) integrase in vitro and stimulates its DNA-joining activity. Interacts with human papillomavirus 18 E1 protein to stimulate its viral replication. Interacts with Epstein-Barr virus protein EBNA-2.

The protein localises to the nucleus. Its function is as follows. Core component of the BAF (hSWI/SNF) complex. This ATP-dependent chromatin-remodeling complex plays important roles in cell proliferation and differentiation, in cellular antiviral activities and inhibition of tumor formation. The BAF complex is able to create a stable, altered form of chromatin that constrains fewer negative supercoils than normal. This change in supercoiling would be due to the conversion of up to one-half of the nucleosomes on polynucleosomal arrays into asymmetric structures, termed altosomes, each composed of 2 histones octamers. Stimulates in vitro the remodeling activity of SMARCA4/BRG1/BAF190A. Involved in activation of CSF1 promoter. Belongs to the neural progenitors-specific chromatin remodeling complex (npBAF complex) and the neuron-specific chromatin remodeling complex (nBAF complex). During neural development a switch from a stem/progenitor to a postmitotic chromatin remodeling mechanism occurs as neurons exit the cell cycle and become committed to their adult state. The transition from proliferating neural stem/progenitor cells to postmitotic neurons requires a switch in subunit composition of the npBAF and nBAF complexes. As neural progenitors exit mitosis and differentiate into neurons, npBAF complexes which contain ACTL6A/BAF53A and PHF10/BAF45A, are exchanged for homologous alternative ACTL6B/BAF53B and DPF1/BAF45B or DPF3/BAF45C subunits in neuron-specific complexes (nBAF). The npBAF complex is essential for the self-renewal/proliferative capacity of the multipotent neural stem cells. The nBAF complex along with CREST plays a role regulating the activity of genes essential for dendrite growth. Plays a key role in cell-cycle control and causes cell cycle arrest in G0/G1. This Homo sapiens (Human) protein is SWI/SNF-related matrix-associated actin-dependent regulator of chromatin subfamily B member 1 (SMARCB1).